The chain runs to 437 residues: ATP-dependent protease ATPase subunit HslU (437 aa).

Residues valine 18, 60 to 65 (GCGKTE), aspartate 250, glutamate 315, and arginine 387 contribute to the ATP site.

It belongs to the ClpX chaperone family. HslU subfamily. As to quaternary structure, a double ring-shaped homohexamer of HslV is capped on each side by a ring-shaped HslU homohexamer. The assembly of the HslU/HslV complex is dependent on binding of ATP.

Its subcellular location is the cytoplasm. ATPase subunit of a proteasome-like degradation complex; this subunit has chaperone activity. The binding of ATP and its subsequent hydrolysis by HslU are essential for unfolding of protein substrates subsequently hydrolyzed by HslV. HslU recognizes the N-terminal part of its protein substrates and unfolds these before they are guided to HslV for hydrolysis. The sequence is that of ATP-dependent protease ATPase subunit HslU from Methylorubrum populi (strain ATCC BAA-705 / NCIMB 13946 / BJ001) (Methylobacterium populi).